The following is a 305-amino-acid chain: Glycine--tRNA ligase alpha subunit (305 aa).

It belongs to the class-II aminoacyl-tRNA synthetase family. As to quaternary structure, tetramer of two alpha and two beta subunits.

It is found in the cytoplasm. The enzyme catalyses tRNA(Gly) + glycine + ATP = glycyl-tRNA(Gly) + AMP + diphosphate. This Streptococcus mutans serotype c (strain ATCC 700610 / UA159) protein is Glycine--tRNA ligase alpha subunit.